The sequence spans 1150 residues: Cohesin subunit SCC3 (1150 aa).

Residues 1–12 (MTAVRRSTRIRT) are compositionally biased toward basic residues. The tract at residues 1 to 122 (MTAVRRSTRI…PAYHRSKKDQ (122 aa)) is disordered. Phosphoserine is present on Ser-28. A compositionally biased stretch (basic and acidic residues) spans 32 to 43 (VESDKITAKTQH). Residues 44–72 (EEEEEQDTGESEESSSEDDYEDQDDDDYV) show a composition bias toward acidic residues. Residues 77 to 87 (AKRKSRKRKPK) show a composition bias toward basic residues. Positions 305-349 (LTQQAVNLEKNYLAKLSKQLSLEEKKKRPNNKTLEKLESTIAETQ) form a coiled coil. Positions 367 to 457 (FVHRYKDVSD…ERFKTKILEV (91 aa)) constitute an SCD domain. Position 628 is a phosphoserine (Ser-628). Residues 1065 to 1150 (ENPEPNKKNI…IDNSDEITQD (86 aa)) are disordered. The span at 1083-1101 (QREKAPLQPNSERETDHAN) shows a compositional bias: basic and acidic residues.

This sequence belongs to the SCC3 family. As to quaternary structure, interacts directly with MCD1 in cohesin complex. Cohesin complexes are composed of the SMC1 and SMC3 heterodimer attached via their hinge domain, MCD1 which link them, and IRR1/SCC3, which interacts with MCD1. The cohesin complex also interacts with SCC2, which is required for its association with chromosomes. Interacts with LIN1. Acetylated by ECO1.

The protein resides in the nucleus. Its subcellular location is the chromosome. The protein localises to the centromere. Functionally, component of cohesin complex, a complex required for the cohesion of sister chromatids after DNA replication. The cohesin complex apparently forms a large proteinaceous ring within which sister chromatids can be trapped. At anaphase, the MCD1/SCC1 subunit of the complex is cleaved and dissociates from chromatin, allowing sister chromatids to segregate. The cohesin complex may also play a role in spindle pole assembly during mitosis. This chain is Cohesin subunit SCC3 (IRR1), found in Saccharomyces cerevisiae (strain ATCC 204508 / S288c) (Baker's yeast).